The chain runs to 384 residues: Monomethylxanthine methyltransferase 2 (384 aa).

Residues tyrosine 18, cysteine 61, asparagine 66, aspartate 100, leucine 101, serine 139, phenylalanine 140, and cysteine 156 each contribute to the S-adenosyl-L-homocysteine site. Theobromine-binding residues include tyrosine 157, histidine 160, and tryptophan 161. Residues asparagine 178, phenylalanine 262, and asparagine 263 each coordinate Mg(2+). A theobromine-binding site is contributed by tyrosine 368.

Belongs to the methyltransferase superfamily. Type-7 methyltransferase family. Mg(2+) serves as cofactor. As to expression, expressed, at low levels, in young leaves, floral buds and immature fruits (grains), but not in old leaves and mature fruits. Highly expressed in developing endosperm and flower buds. Detected in young leaves.

It carries out the reaction 7-methylxanthine + S-adenosyl-L-methionine = theobromine + S-adenosyl-L-homocysteine + H(+). Its pathway is alkaloid biosynthesis. Its function is as follows. Involved in the biosynthesis of caffeine. Catalyzes the conversion of 7-methylxanthine (7mX) to theobromine and with a lower activity of paraxanthine to caffeine. Does not have 1-N-methylation activity. The sequence is that of Monomethylxanthine methyltransferase 2 from Coffea arabica (Arabian coffee).